We begin with the raw amino-acid sequence, 224 residues long: Flagellar L-ring protein (224 aa).

A signal peptide spans 1-15 (MARYLVLAVALLLAA). C16 carries N-palmitoyl cysteine lipidation. C16 carries S-diacylglycerol cysteine lipidation.

Belongs to the FlgH family. In terms of assembly, the basal body constitutes a major portion of the flagellar organelle and consists of four rings (L,P,S, and M) mounted on a central rod.

Its subcellular location is the cell outer membrane. The protein localises to the bacterial flagellum basal body. Its function is as follows. Assembles around the rod to form the L-ring and probably protects the motor/basal body from shearing forces during rotation. The chain is Flagellar L-ring protein from Shewanella baltica (strain OS185).